The following is a 46-amino-acid chain: Protein PsbN (46 aa).

Residues 10–30 (VSIAVLTALLGLTGFGIYTAF) form a helical membrane-spanning segment.

It belongs to the PsbN family.

The protein localises to the cellular thylakoid membrane. Its function is as follows. May play a role in photosystem I and II biogenesis. The chain is Protein PsbN from Synechococcus sp. (strain RCC307).